We begin with the raw amino-acid sequence, 157 residues long: uncharacterized protein (157 aa).

An N-terminal signal peptide occupies residues M1 to G23.

The protein resides in the secreted. This is an uncharacterized protein from Mus musculus (Mouse).